The chain runs to 176 residues: Crossover junction endodeoxyribonuclease RuvC (176 aa).

Catalysis depends on residues D12, E72, and D144. Residues D12, E72, and D144 each contribute to the Mg(2+) site.

It belongs to the RuvC family. Homodimer which binds Holliday junction (HJ) DNA. The HJ becomes 2-fold symmetrical on binding to RuvC with unstacked arms; it has a different conformation from HJ DNA in complex with RuvA. In the full resolvosome a probable DNA-RuvA(4)-RuvB(12)-RuvC(2) complex forms which resolves the HJ. Mg(2+) serves as cofactor.

The protein localises to the cytoplasm. It catalyses the reaction Endonucleolytic cleavage at a junction such as a reciprocal single-stranded crossover between two homologous DNA duplexes (Holliday junction).. In terms of biological role, the RuvA-RuvB-RuvC complex processes Holliday junction (HJ) DNA during genetic recombination and DNA repair. Endonuclease that resolves HJ intermediates. Cleaves cruciform DNA by making single-stranded nicks across the HJ at symmetrical positions within the homologous arms, yielding a 5'-phosphate and a 3'-hydroxyl group; requires a central core of homology in the junction. The consensus cleavage sequence is 5'-(A/T)TT(C/G)-3'. Cleavage occurs on the 3'-side of the TT dinucleotide at the point of strand exchange. HJ branch migration catalyzed by RuvA-RuvB allows RuvC to scan DNA until it finds its consensus sequence, where it cleaves and resolves the cruciform DNA. This chain is Crossover junction endodeoxyribonuclease RuvC, found in Methylocella silvestris (strain DSM 15510 / CIP 108128 / LMG 27833 / NCIMB 13906 / BL2).